The primary structure comprises 380 residues: Glucose-1-phosphate adenylyltransferase (380 aa).

Residues Gly164, Glu179–Lys180, and Ser190 contribute to the alpha-D-glucose 1-phosphate site.

It belongs to the bacterial/plant glucose-1-phosphate adenylyltransferase family. As to quaternary structure, homotetramer.

The enzyme catalyses alpha-D-glucose 1-phosphate + ATP + H(+) = ADP-alpha-D-glucose + diphosphate. The protein operates within glycan biosynthesis; glycogen biosynthesis. Its function is as follows. Involved in the biosynthesis of ADP-glucose, a building block required for the elongation reactions to produce glycogen. Catalyzes the reaction between ATP and alpha-D-glucose 1-phosphate (G1P) to produce pyrophosphate and ADP-Glc. The chain is Glucose-1-phosphate adenylyltransferase from Lactococcus lactis subsp. cremoris (strain MG1363).